The primary structure comprises 377 residues: Ribosomal RNA large subunit methyltransferase G (377 aa).

The protein belongs to the methyltransferase superfamily. RlmG family.

It is found in the cytoplasm. It carries out the reaction guanosine(1835) in 23S rRNA + S-adenosyl-L-methionine = N(2)-methylguanosine(1835) in 23S rRNA + S-adenosyl-L-homocysteine + H(+). Functionally, specifically methylates the guanine in position 1835 (m2G1835) of 23S rRNA. The polypeptide is Ribosomal RNA large subunit methyltransferase G (Shewanella oneidensis (strain ATCC 700550 / JCM 31522 / CIP 106686 / LMG 19005 / NCIMB 14063 / MR-1)).